The primary structure comprises 166 residues: SPbeta prophage-derived uncharacterized protein YomO (166 aa).

The sequence is that of SPbeta prophage-derived uncharacterized protein YomO (yomO) from Bacillus subtilis (strain 168).